The chain runs to 239 residues: Retrotransposon Gag-like protein 6 (239 aa).

Positions 29–69 (LTSLRLTNSALRREASTLRAEKANLTNMLESVMAELTLLRT) form a coiled coil. The span at 82-94 (PISSITSNGTRPM) shows a compositional bias: polar residues. Disordered stretches follow at residues 82 to 106 (PISS…EPFS) and 214 to 239 (TGPC…ARNL). Residues 228-239 (PAPALPARARNL) are compositionally biased toward low complexity.

The protein belongs to the LDOC1 family.

The protein is Retrotransposon Gag-like protein 6 of Homo sapiens (Human).